We begin with the raw amino-acid sequence, 181 residues long: Isopentenyl-diphosphate Delta-isomerase (181 aa).

Residues histidine 29 and histidine 36 each contribute to the Mn(2+) site. The Nudix hydrolase domain maps to 34–167; sequence PLHLAFSCYL…GWAISPWAAE (134 aa). Residue cysteine 71 is part of the active site. Histidine 73 serves as a coordination point for Mn(2+). Glutamate 91 provides a ligand contact to Mg(2+). Glutamate 118 and glutamate 120 together coordinate Mn(2+). The active site involves glutamate 120.

This sequence belongs to the IPP isomerase type 1 family. Mg(2+) is required as a cofactor. Requires Mn(2+) as cofactor.

It is found in the cytoplasm. It carries out the reaction isopentenyl diphosphate = dimethylallyl diphosphate. The protein operates within isoprenoid biosynthesis; dimethylallyl diphosphate biosynthesis; dimethylallyl diphosphate from isopentenyl diphosphate: step 1/1. Catalyzes the 1,3-allylic rearrangement of the homoallylic substrate isopentenyl (IPP) to its highly electrophilic allylic isomer, dimethylallyl diphosphate (DMAPP). This Mycolicibacterium vanbaalenii (strain DSM 7251 / JCM 13017 / BCRC 16820 / KCTC 9966 / NRRL B-24157 / PYR-1) (Mycobacterium vanbaalenii) protein is Isopentenyl-diphosphate Delta-isomerase.